Reading from the N-terminus, the 148-residue chain is MEFIQKKDIPYFSECEPLVEGLGFKLVDLNVLHKKDVWQVKAVIKSEKGVGIKDCTSVHRTLQPRIEALIGSQDVTMEVSSPGINRLVKRAVEFYAFVGEEAQIWDNSITDWRHGIIKEVNSEGLVLNSDNQDIQIPYQDIKKARCNL.

This sequence belongs to the RimP family.

It localises to the cytoplasm. Its function is as follows. Required for maturation of 30S ribosomal subunits. The protein is Ribosome maturation factor RimP of Treponema denticola (strain ATCC 35405 / DSM 14222 / CIP 103919 / JCM 8153 / KCTC 15104).